The chain runs to 299 residues: CCR4-NOT transcription complex subunit 9 (299 aa).

Belongs to the CNOT9 family. Homodimer. Component of the CCR4-NOT complex.

Its subcellular location is the nucleus. It localises to the cytoplasm. The protein resides in the P-body. Its function is as follows. Component of the CCR4-NOT complex which is one of the major cellular mRNA deadenylases and is linked to various cellular processes including bulk mRNA degradation, miRNA-mediated repression, translational repression during translational initiation and general transcription regulation. Additional complex functions may be a consequence of its influence on mRNA expression. Involved in down-regulation of MYB- and JUN-dependent transcription. Enhances ligand-dependent transcriptional activity of nuclear hormone receptors. May play a role in cell differentiation. The polypeptide is CCR4-NOT transcription complex subunit 9 (Xenopus tropicalis (Western clawed frog)).